The following is a 116-amino-acid chain: Large ribosomal subunit protein bL19 (116 aa).

The protein belongs to the bacterial ribosomal protein bL19 family.

Its function is as follows. This protein is located at the 30S-50S ribosomal subunit interface and may play a role in the structure and function of the aminoacyl-tRNA binding site. This Flavobacterium psychrophilum (strain ATCC 49511 / DSM 21280 / CIP 103535 / JIP02/86) protein is Large ribosomal subunit protein bL19.